Reading from the N-terminus, the 158-residue chain is Crossover junction endodeoxyribonuclease RuvC (158 aa).

Catalysis depends on residues D7, E67, and D140. Positions 7, 67, and 140 each coordinate Mg(2+).

This sequence belongs to the RuvC family. In terms of assembly, homodimer which binds Holliday junction (HJ) DNA. The HJ becomes 2-fold symmetrical on binding to RuvC with unstacked arms; it has a different conformation from HJ DNA in complex with RuvA. In the full resolvosome a probable DNA-RuvA(4)-RuvB(12)-RuvC(2) complex forms which resolves the HJ. It depends on Mg(2+) as a cofactor.

It is found in the cytoplasm. The enzyme catalyses Endonucleolytic cleavage at a junction such as a reciprocal single-stranded crossover between two homologous DNA duplexes (Holliday junction).. Its function is as follows. The RuvA-RuvB-RuvC complex processes Holliday junction (HJ) DNA during genetic recombination and DNA repair. Endonuclease that resolves HJ intermediates. Cleaves cruciform DNA by making single-stranded nicks across the HJ at symmetrical positions within the homologous arms, yielding a 5'-phosphate and a 3'-hydroxyl group; requires a central core of homology in the junction. The consensus cleavage sequence is 5'-(A/T)TT(C/G)-3'. Cleavage occurs on the 3'-side of the TT dinucleotide at the point of strand exchange. HJ branch migration catalyzed by RuvA-RuvB allows RuvC to scan DNA until it finds its consensus sequence, where it cleaves and resolves the cruciform DNA. This chain is Crossover junction endodeoxyribonuclease RuvC, found in Dictyoglomus thermophilum (strain ATCC 35947 / DSM 3960 / H-6-12).